A 302-amino-acid polypeptide reads, in one-letter code: Putative gluconeogenesis factor (302 aa).

Belongs to the gluconeogenesis factor family.

Its subcellular location is the cytoplasm. Required for morphogenesis under gluconeogenic growth conditions. This Salmonella typhi protein is Putative gluconeogenesis factor (ybhK).